Consider the following 305-residue polypeptide: Protoheme IX farnesyltransferase 1 (305 aa).

Helical transmembrane passes span 30-50 (IGIV…AFQF), 59-79 (LDVI…SGAM), 108-128 (FVLT…FAAS), 129-149 (FAAG…YSMW), 154-176 (HVSN…FAAV), 180-202 (LGPG…FYAL), 232-252 (LFWI…GIGF), 253-273 (LTLA…GFTA), and 284-304 (FIYS…FAVF).

This sequence belongs to the UbiA prenyltransferase family. Protoheme IX farnesyltransferase subfamily. In terms of assembly, interacts with CtaA.

Its subcellular location is the cell membrane. It catalyses the reaction heme b + (2E,6E)-farnesyl diphosphate + H2O = Fe(II)-heme o + diphosphate. It participates in porphyrin-containing compound metabolism; heme O biosynthesis; heme O from protoheme: step 1/1. Its function is as follows. Converts heme B (protoheme IX) to heme O by substitution of the vinyl group on carbon 2 of heme B porphyrin ring with a hydroxyethyl farnesyl side group. This chain is Protoheme IX farnesyltransferase 1, found in Lysinibacillus sphaericus (strain C3-41).